A 234-amino-acid polypeptide reads, in one-letter code: Phosphoribosylaminoimidazole-succinocarboxamide synthase (234 aa).

The protein belongs to the SAICAR synthetase family.

The enzyme catalyses 5-amino-1-(5-phospho-D-ribosyl)imidazole-4-carboxylate + L-aspartate + ATP = (2S)-2-[5-amino-1-(5-phospho-beta-D-ribosyl)imidazole-4-carboxamido]succinate + ADP + phosphate + 2 H(+). The protein operates within purine metabolism; IMP biosynthesis via de novo pathway; 5-amino-1-(5-phospho-D-ribosyl)imidazole-4-carboxamide from 5-amino-1-(5-phospho-D-ribosyl)imidazole-4-carboxylate: step 1/2. The sequence is that of Phosphoribosylaminoimidazole-succinocarboxamide synthase from Streptococcus uberis (strain ATCC BAA-854 / 0140J).